A 292-amino-acid polypeptide reads, in one-letter code: Glycine--tRNA ligase alpha subunit (292 aa).

This sequence belongs to the class-II aminoacyl-tRNA synthetase family. As to quaternary structure, tetramer of two alpha and two beta subunits.

Its subcellular location is the cytoplasm. It carries out the reaction tRNA(Gly) + glycine + ATP = glycyl-tRNA(Gly) + AMP + diphosphate. In Pelobacter propionicus (strain DSM 2379 / NBRC 103807 / OttBd1), this protein is Glycine--tRNA ligase alpha subunit.